The sequence spans 322 residues: Ribonuclease Z (322 aa).

Positions 62, 64, 66, 67, 143, 215, and 273 each coordinate Zn(2+). Aspartate 66 functions as the Proton acceptor in the catalytic mechanism. Residues 300-314 are compositionally biased toward basic and acidic residues; sequence ELRRYELDPREKEPD. Residues 300-322 are disordered; the sequence is ELRRYELDPREKEPDPVGPADES.

It belongs to the RNase Z family. As to quaternary structure, homodimer. The cofactor is Zn(2+).

It carries out the reaction Endonucleolytic cleavage of RNA, removing extra 3' nucleotides from tRNA precursor, generating 3' termini of tRNAs. A 3'-hydroxy group is left at the tRNA terminus and a 5'-phosphoryl group is left at the trailer molecule.. Zinc phosphodiesterase, which displays some tRNA 3'-processing endonuclease activity. Probably involved in tRNA maturation, by removing a 3'-trailer from precursor tRNA. This chain is Ribonuclease Z, found in Salinibacter ruber (strain DSM 13855 / M31).